A 334-amino-acid polypeptide reads, in one-letter code: Nucleoid-associated protein plu2870 (334 aa).

This sequence belongs to the YejK family.

It is found in the cytoplasm. The protein resides in the nucleoid. The protein is Nucleoid-associated protein plu2870 of Photorhabdus laumondii subsp. laumondii (strain DSM 15139 / CIP 105565 / TT01) (Photorhabdus luminescens subsp. laumondii).